A 224-amino-acid polypeptide reads, in one-letter code: 7-cyano-7-deazaguanine synthase (224 aa).

12–22 (MSGGMDSTLGA) is an ATP binding site. Cysteine 191, cysteine 199, cysteine 202, and cysteine 205 together coordinate Zn(2+).

This sequence belongs to the QueC family. Zn(2+) is required as a cofactor.

The enzyme catalyses 7-carboxy-7-deazaguanine + NH4(+) + ATP = 7-cyano-7-deazaguanine + ADP + phosphate + H2O + H(+). It participates in purine metabolism; 7-cyano-7-deazaguanine biosynthesis. In terms of biological role, catalyzes the ATP-dependent conversion of 7-carboxy-7-deazaguanine (CDG) to 7-cyano-7-deazaguanine (preQ(0)). This chain is 7-cyano-7-deazaguanine synthase, found in Sulfurimonas denitrificans (strain ATCC 33889 / DSM 1251) (Thiomicrospira denitrificans (strain ATCC 33889 / DSM 1251)).